A 94-amino-acid chain; its full sequence is Small ribosomal subunit protein uS19m (94 aa).

The protein belongs to the universal ribosomal protein uS19 family.

It is found in the mitochondrion. The polypeptide is Small ribosomal subunit protein uS19m (RPS19) (Petunia hybrida (Petunia)).